A 358-amino-acid chain; its full sequence is Purine permease 2 (358 aa).

10 consecutive transmembrane segments (helical) span residues 6-26 (VLVIINCIFLAIGNCGGPLMM), 37-57 (IWFPSFLQTVGCPLIFFPLLL), 74-94 (FFLMKPPLFIAAIVVGLLVGF), 110-130 (TASLIISAQLGFTALFAFFMV), 134-154 (FTPFTINAIVLLTGGAVVLAL), 170-190 (VVGFIMTLGAALLYGFILPLV), 209-229 (FQMVLCFAATCVCLVGMLAAG), 262-282 (VIVFTAIIWQAFFVGAIGLIF), 288-308 (VSGIMVSALLPVTVILAVICF), and 312-332 (FQAGKGVALALSLWGSVSYFY). The EamA domain occupies 46–154 (VGCPLIFFPL…LTGGAVVLAL (109 aa)).

The protein belongs to the purine permeases (TC 2.A.7.14) family. Expressed in the vascular system of leaves. Restricted to the phloem. Expressed in flowers and roots and not detected in stems.

It is found in the membrane. With respect to regulation, competitive inhibition of adenine transport by isopentenyladenine, kinetin, benzylaminopurine, trans- and cis-zeatin and trans-zeatin riboside. Mediates adenine transport. May be involved in the uptake of cytokinin analogs. In Arabidopsis thaliana (Mouse-ear cress), this protein is Purine permease 2 (PUP2).